The primary structure comprises 334 residues: Ribosomal lysine N-methyltransferase 5 (334 aa).

S-adenosyl-L-methionine-binding positions include W88, 155-157, D177, W227, and M254; that span reads GAG.

This sequence belongs to the class I-like SAM-binding methyltransferase superfamily. RKM5 family.

Its function is as follows. S-adenosyl-L-methionine-dependent protein-lysine N-methyltransferase that methylates 60S ribosomal protein L1. The polypeptide is Ribosomal lysine N-methyltransferase 5 (RKM5) (Lachancea thermotolerans (strain ATCC 56472 / CBS 6340 / NRRL Y-8284) (Yeast)).